Here is a 227-residue protein sequence, read N- to C-terminus: 2-C-methyl-D-erythritol 4-phosphate cytidylyltransferase (227 aa).

Belongs to the IspD/TarI cytidylyltransferase family. IspD subfamily.

The catalysed reaction is 2-C-methyl-D-erythritol 4-phosphate + CTP + H(+) = 4-CDP-2-C-methyl-D-erythritol + diphosphate. The protein operates within isoprenoid biosynthesis; isopentenyl diphosphate biosynthesis via DXP pathway; isopentenyl diphosphate from 1-deoxy-D-xylulose 5-phosphate: step 2/6. In terms of biological role, catalyzes the formation of 4-diphosphocytidyl-2-C-methyl-D-erythritol from CTP and 2-C-methyl-D-erythritol 4-phosphate (MEP). This is 2-C-methyl-D-erythritol 4-phosphate cytidylyltransferase from Bordetella bronchiseptica (strain ATCC BAA-588 / NCTC 13252 / RB50) (Alcaligenes bronchisepticus).